The chain runs to 235 residues: Enolase-phosphatase E1 (235 aa).

Belongs to the HAD-like hydrolase superfamily. MasA/MtnC family. As to quaternary structure, monomer. Requires Mg(2+) as cofactor.

The enzyme catalyses 5-methylsulfanyl-2,3-dioxopentyl phosphate + H2O = 1,2-dihydroxy-5-(methylsulfanyl)pent-1-en-3-one + phosphate. Its pathway is amino-acid biosynthesis; L-methionine biosynthesis via salvage pathway; L-methionine from S-methyl-5-thio-alpha-D-ribose 1-phosphate: step 3/6. It functions in the pathway amino-acid biosynthesis; L-methionine biosynthesis via salvage pathway; L-methionine from S-methyl-5-thio-alpha-D-ribose 1-phosphate: step 4/6. Bifunctional enzyme that catalyzes the enolization of 2,3-diketo-5-methylthiopentyl-1-phosphate (DK-MTP-1-P) into the intermediate 2-hydroxy-3-keto-5-methylthiopentenyl-1-phosphate (HK-MTPenyl-1-P), which is then dephosphorylated to form the acireductone 1,2-dihydroxy-3-keto-5-methylthiopentene (DHK-MTPene). This Gluconacetobacter diazotrophicus (strain ATCC 49037 / DSM 5601 / CCUG 37298 / CIP 103539 / LMG 7603 / PAl5) protein is Enolase-phosphatase E1.